Here is a 318-residue protein sequence, read N- to C-terminus: Biotin synthase (318 aa).

One can recognise a Radical SAM core domain in the interval 44–273 (LCGNKFDLCT…TVQIRLAGGR (230 aa)). [4Fe-4S] cluster is bound by residues Cys-62, Cys-66, and Cys-69. Residues Ser-106, Cys-138, Cys-198, and Arg-268 each coordinate [2Fe-2S] cluster.

The protein belongs to the radical SAM superfamily. Biotin synthase family. In terms of assembly, homodimer. It depends on [4Fe-4S] cluster as a cofactor. [2Fe-2S] cluster is required as a cofactor.

The enzyme catalyses (4R,5S)-dethiobiotin + (sulfur carrier)-SH + 2 reduced [2Fe-2S]-[ferredoxin] + 2 S-adenosyl-L-methionine = (sulfur carrier)-H + biotin + 2 5'-deoxyadenosine + 2 L-methionine + 2 oxidized [2Fe-2S]-[ferredoxin]. Its pathway is cofactor biosynthesis; biotin biosynthesis; biotin from 7,8-diaminononanoate: step 2/2. Its function is as follows. Catalyzes the conversion of dethiobiotin (DTB) to biotin by the insertion of a sulfur atom into dethiobiotin via a radical-based mechanism. In Clostridium botulinum (strain Langeland / NCTC 10281 / Type F), this protein is Biotin synthase.